The sequence spans 210 residues: Glutathione S-transferase P (210 aa).

Residues 2–81 enclose the GST N-terminal domain; sequence PPYTVVYFPV…HLGRTLGLYG (80 aa). A Phosphotyrosine; by EGFR modification is found at tyrosine 4. Residues tyrosine 8, arginine 14, tryptophan 39, lysine 45, and 52–53 contribute to the glutathione site; that span reads QL. Position 62 is a phosphothreonine (threonine 62). Residue 65–66 participates in glutathione binding; it reads QS. A GST C-terminal domain is found at 83-204; it reads DQREAALVDM…ASPEHVNLPI (122 aa). An N6-succinyllysine mark is found at lysine 103 and lysine 116. Lysine 128 bears the N6-acetyllysine mark.

Belongs to the GST superfamily. Pi family. In terms of assembly, homodimer. Interacts with CDK5.

The protein resides in the cytoplasm. It is found in the mitochondrion. The protein localises to the nucleus. It carries out the reaction RX + glutathione = an S-substituted glutathione + a halide anion + H(+). The catalysed reaction is prostaglandin J2 + glutathione = prostaglandin J2-S-(R)-glutathione. The enzyme catalyses prostaglandin J2 + glutathione = prostaglandin J2-S-(S)-glutathione. It catalyses the reaction prostaglandin A2 + glutathione = prostaglandin A2-S-(S)-glutathione. It carries out the reaction 11(S)-hydroxy-14(S),15(S)-epoxy-(5Z,8Z,12E)-eicosatrienoate + glutathione = (11S,15S)-dihydroxy-14(R)-S-glutathionyl-(5Z,8Z,12E)-eicosatrienoate. Its function is as follows. Conjugation of reduced glutathione to a wide number of exogenous and endogenous hydrophobic electrophiles. Involved in the formation of glutathione conjugates of both prostaglandin A2 (PGA2) and prostaglandin J2 (PGJ2). Participates in the formation of novel hepoxilin regioisomers. Negatively regulates CDK5 activity via p25/p35 translocation to prevent neurodegeneration. The sequence is that of Glutathione S-transferase P (GSTP1) from Pongo abelii (Sumatran orangutan).